A 291-amino-acid polypeptide reads, in one-letter code: Small ribosomal subunit protein uS2 (291 aa).

The protein belongs to the universal ribosomal protein uS2 family.

The protein is Small ribosomal subunit protein uS2 of Orientia tsutsugamushi (strain Boryong) (Rickettsia tsutsugamushi).